Consider the following 932-residue polypeptide: Chitin synthase regulatory factor 3 (932 aa).

The span at 1-16 shows a compositional bias: basic and acidic residues; the sequence is MKDSHSSRRKYEKEKL. Disordered regions lie at residues 1 to 53, 264 to 356, and 374 to 406; these read MKDS…PTSR, TLEE…LQQP, and EVPA…NPTV. Polar residues-rich tracts occupy residues 35-53, 274-285, and 308-319; these read SGNT…PTSR, DSITNTVSNASS, and SHFSSTDSNTDS. The segment covering 337-349 has biased composition (basic and acidic residues); it reads KSSETLKNPRNDD. A Phosphoserine modification is found at Ser393. 7 Sel1-like repeats span residues 638–674, 675–710, 711–747, 751–788, 789–825, 826–863, and 864–899; these read PEAL…KKGH, PLSN…EMDV, VEAM…KSKG, VRAM…VYGY, AAAQ…EQDY, GEAE…CKGL, and AKAQ…KQGF. A disordered region spans residues 905 to 932; it reads RLEEQALSSKQTHSKAPKKKQQEQCVVM.

This is Chitin synthase regulatory factor 3 (chr3) from Schizosaccharomyces pombe (strain 972 / ATCC 24843) (Fission yeast).